We begin with the raw amino-acid sequence, 84 residues long: Small ribosomal subunit protein uS17c (84 aa).

Belongs to the universal ribosomal protein uS17 family. In terms of assembly, part of the 30S ribosomal subunit.

The protein resides in the plastid. The protein localises to the chloroplast. One of the primary rRNA binding proteins, it binds specifically to the 5'-end of 16S ribosomal RNA. This is Small ribosomal subunit protein uS17c (rps17) from Thalassiosira pseudonana (Marine diatom).